The following is a 669-amino-acid chain: Acetolactate synthase, mitochondrial (669 aa).

The transit peptide at 1–140 (MTVLAPLRRL…PRHEQAAGHA (140 aa)) directs the protein to the mitochondrion. Glu-134 is a thiamine diphosphate binding site. FAD is bound by residues Arg-236, 351-372 (HGSG…LGVR), and 403-422 (DISP…IEGD). The tract at residues 497-577 (AHQMWAATFY…VKILILNNEE (81 aa)) is thiamine pyrophosphate binding. Mg(2+) is bound by residues Asp-548 and Asn-575.

Belongs to the TPP enzyme family. Mg(2+) serves as cofactor. Thiamine diphosphate is required as a cofactor.

It is found in the mitochondrion. It catalyses the reaction 2 pyruvate + H(+) = (2S)-2-acetolactate + CO2. It functions in the pathway amino-acid biosynthesis; L-isoleucine biosynthesis; L-isoleucine from 2-oxobutanoate: step 1/4. It participates in amino-acid biosynthesis; L-valine biosynthesis; L-valine from pyruvate: step 1/4. In Schizosaccharomyces pombe (strain 972 / ATCC 24843) (Fission yeast), this protein is Acetolactate synthase, mitochondrial (ilv1).